The chain runs to 628 residues: tRNA uridine 5-carboxymethylaminomethyl modification enzyme MnmG (628 aa).

Position 13-18 (13-18) interacts with FAD; the sequence is GAGHAG. 273 to 287 contacts NAD(+); that stretch reads GPRYCPSIEDKIVRF.

Belongs to the MnmG family. In terms of assembly, homodimer. Heterotetramer of two MnmE and two MnmG subunits. FAD is required as a cofactor.

It is found in the cytoplasm. Its function is as follows. NAD-binding protein involved in the addition of a carboxymethylaminomethyl (cmnm) group at the wobble position (U34) of certain tRNAs, forming tRNA-cmnm(5)s(2)U34. The protein is tRNA uridine 5-carboxymethylaminomethyl modification enzyme MnmG of Buchnera aphidicola subsp. Acyrthosiphon pisum (strain APS) (Acyrthosiphon pisum symbiotic bacterium).